Reading from the N-terminus, the 264-residue chain is 3-methyl-2-oxobutanoate hydroxymethyltransferase (264 aa).

Residues Asp-45 and Asp-84 each coordinate Mg(2+). 3-methyl-2-oxobutanoate contacts are provided by residues 45-46 (DS), Asp-84, and Lys-112. Residue Glu-114 coordinates Mg(2+). Glu-181 functions as the Proton acceptor in the catalytic mechanism.

Belongs to the PanB family. As to quaternary structure, homodecamer; pentamer of dimers. Mg(2+) serves as cofactor.

The protein localises to the cytoplasm. The catalysed reaction is 3-methyl-2-oxobutanoate + (6R)-5,10-methylene-5,6,7,8-tetrahydrofolate + H2O = 2-dehydropantoate + (6S)-5,6,7,8-tetrahydrofolate. Its pathway is cofactor biosynthesis; (R)-pantothenate biosynthesis; (R)-pantoate from 3-methyl-2-oxobutanoate: step 1/2. Its function is as follows. Catalyzes the reversible reaction in which hydroxymethyl group from 5,10-methylenetetrahydrofolate is transferred onto alpha-ketoisovalerate to form ketopantoate. The polypeptide is 3-methyl-2-oxobutanoate hydroxymethyltransferase (Shewanella sp. (strain MR-7)).